The following is a 498-amino-acid chain: Putative F-box/FBD/LRR-repeat protein At4g03220 (498 aa).

The region spanning 23–71 is the F-box domain; the sequence is VDRISNLPDSLNHQILLLLPLKSAAQASLLSKRWRSLFLSLPDLDFTSI. 3 LRR repeats span residues 148–172, 175–200, and 235–259; these read SQNLRALTLKSANLGFRLPPSSSAR, FQKLTSLSLSRVILHNQPCLSDFFTD, and SLQLEGLEVSGNKLQKLKVESCFYS. An FBD domain is found at 416 to 466; it reads YWESQAYELESFLNHLEFVEIHGFVECENEMSLAIFLLRHGKALIKMTLRS.

This chain is Putative F-box/FBD/LRR-repeat protein At4g03220, found in Arabidopsis thaliana (Mouse-ear cress).